Reading from the N-terminus, the 249-residue chain is 1-(5-phosphoribosyl)-5-[(5-phosphoribosylamino)methylideneamino] imidazole-4-carboxamide isomerase (249 aa).

The active-site Proton acceptor is Asp-11. Asp-133 acts as the Proton donor in catalysis.

It belongs to the HisA/HisF family.

Its subcellular location is the cytoplasm. It carries out the reaction 1-(5-phospho-beta-D-ribosyl)-5-[(5-phospho-beta-D-ribosylamino)methylideneamino]imidazole-4-carboxamide = 5-[(5-phospho-1-deoxy-D-ribulos-1-ylimino)methylamino]-1-(5-phospho-beta-D-ribosyl)imidazole-4-carboxamide. The protein operates within amino-acid biosynthesis; L-histidine biosynthesis; L-histidine from 5-phospho-alpha-D-ribose 1-diphosphate: step 4/9. The protein is 1-(5-phosphoribosyl)-5-[(5-phosphoribosylamino)methylideneamino] imidazole-4-carboxamide isomerase of Haemophilus influenzae (strain 86-028NP).